The following is a 449-amino-acid chain: Glutamate--tRNA ligase 2 (449 aa).

Positions 11 to 21 (PSPTGFLHIGN) match the 'HIGH' region motif. The 'KMSKS' region signature appears at 242–246 (GLSKR). Position 245 (K245) interacts with ATP.

It belongs to the class-I aminoacyl-tRNA synthetase family. Glutamate--tRNA ligase type 1 subfamily. In terms of assembly, monomer.

The protein resides in the cytoplasm. It carries out the reaction tRNA(Glu) + L-glutamate + ATP = L-glutamyl-tRNA(Glu) + AMP + diphosphate. In terms of biological role, catalyzes the attachment of glutamate to tRNA(Glu) in a two-step reaction: glutamate is first activated by ATP to form Glu-AMP and then transferred to the acceptor end of tRNA(Glu). In Methylorubrum populi (strain ATCC BAA-705 / NCIMB 13946 / BJ001) (Methylobacterium populi), this protein is Glutamate--tRNA ligase 2.